The sequence spans 559 residues: MDVESSSPSSHALIKKEKGGWRAIKYIIANESFEKLASMSLIGNLSVYLMTKYNLGGVFLVNVINIWFGSCNILTLAGAFVSDAYLGRFWTLLLGSIASFIGMGIFALTAALPSLRPDACIDPSNCSNQPAKWQLGVLFSGLGLLAIGAGGVRPCNIAFGADQFDTSTKKGKAHLETFFNWWYFSFTVALVIALTGVVYIQTNISWVIGFVIPTACLALSITTFVIGQHTYICAKAEGSVFADIVKVVTAACKKRKVKPGSDITFYIGPSNDGSPTTLVRDKHRLRFFDKASIVTNPNELNEDGNAKYKWRLCSVQQVKNLKCVTAILPVWVTGIACFILTDQQNIYGILQAMQMDKTFGPHNFQVPAGWMNLVSMITLAIWISLYECVIIPIVKQITGRKKRLTLKHRIEIVMGIICMIVAGFQEKKRRASALKNGSFVSPVSIVMLLPQFALAGLTEAFSAVALMEFLTVRMPEHMRAVAGAIFFLSSSIASYICTLLINVIDAVTRKEGKSWLGDKDLNKNRLENYFFIIAGIQVANLLYFRLFASRYATENKKGH.

Helical transmembrane passes span 57–77 (GVFL…LTLA), 92–112 (LLLG…TAAL), 132–152 (KWQL…AGGV), 178–198 (FFNW…TGVV), 206–226 (WVIG…TFVI), 321–341 (LKCV…FILT), 374–394 (VSMI…IPIV), 404–424 (LTLK…VAGF), 437–457 (GSFV…LAGL), 481–501 (VAGA…TLLI), and 529–549 (YFFI…LFAS).

It belongs to the major facilitator superfamily. Proton-dependent oligopeptide transporter (POT/PTR) (TC 2.A.17) family. In terms of tissue distribution, expressed in flowers.

It localises to the membrane. The sequence is that of Protein NRT1/ PTR FAMILY 2.8 (NPF2.8) from Arabidopsis thaliana (Mouse-ear cress).